Consider the following 651-residue polypeptide: Intraflagellar transport protein 70A (651 aa).

TPR repeat units follow at residues 8–41 (DGEY…HTKS), 42–75 (RAAL…HPEV), 140–173 (PDYD…LGYQ), 175–207 (DLAY…GIRE), 379–410 (VTKQ…EKYI), 411–443 (PVLM…CNEH), and 445–478 (TWKL…HYEN). A coiled-coil region spans residues 494-521 (YIMTSQNEEAEELMRKIEKEEEQISYDD). One copy of the TPR 8 repeat lies at 530–563 (CIVNLVIGTLYCAKGNYDFGISRVIKSLEPYNKK).

The protein belongs to the TTC30/dfy-1/fleer family. As to expression, localizes to the cilia of many ciliated epithelial cell types including pronephric cells, olfactory placode, the brain ventricle and lateral line organs.

Its subcellular location is the cell projection. It localises to the cilium. In terms of biological role, plays a role in anterograde intraflagellar transport (IFT), the process by which cilia precursors are transported from the base of the cilium to the site of their incorporation at the tip. Required for polyglutamylation of axonemal tubulin, which is a prerequisite for correct assembly of cilia and for normal cilia beat amplitude. Does not seem to be required for neuronal microtubule polyglutamylation. This chain is Intraflagellar transport protein 70A (ift70a), found in Danio rerio (Zebrafish).